The chain runs to 390 residues: Protein shisa-9 (390 aa).

The first 22 residues, 1-22, serve as a signal peptide directing secretion; that stretch reads MTGIRAIFYYFLVDLLTLLCWA. Topologically, residues 23–134 are extracellular; sequence QGKGGQHFGS…DPSHDPTRDK (112 aa). 2 N-linked (GlcNAc...) asparagine glycosylation sites follow: asparagine 40 and asparagine 74. The chain crosses the membrane as a helical span at residues 135-155; sequence TNLIVYIICGVVAVMVLVGIF. The Cytoplasmic portion of the chain corresponds to 156–390; that stretch reads TKLGLEKAHR…VTNSKTEVTV (235 aa).

Belongs to the shisa family. SHISA9 subfamily. Component of some AMPA receptors (ionotropic glutamate receptors) complex.

The protein localises to the cell projection. Its subcellular location is the dendritic spine membrane. It localises to the synapse. In terms of biological role, regulator of short-term neuronal synaptic plasticity in the dentate gyrus. Associates with AMPA receptors (ionotropic glutamate receptors) in synaptic spines and promotes AMPA receptor desensitization at excitatory synapses. This chain is Protein shisa-9 (shisa9), found in Xenopus tropicalis (Western clawed frog).